Reading from the N-terminus, the 425-residue chain is UBX domain-containing protein 4 (425 aa).

The interval 224 to 257 (TPIPSLPSTPSSYQNLPSQSLTGESLPTVSNQEK) is disordered. Residues 236–254 (YQNLPSQSLTGESLPTVSN) show a composition bias toward polar residues. S338 is subject to Phosphoserine. The UBX domain maps to 341–390 (PLPSSAIVKFDFGNGKSIVHEFSKDDNIETLRAFVASHLSPEESTSFQLT).

It localises to the cytoplasm. The protein localises to the nucleus. Functionally, involved in CDC48-dependent protein degradation through the ubiquitin/proteasome pathway. This is UBX domain-containing protein 4 (ubx4) from Schizosaccharomyces pombe (strain 972 / ATCC 24843) (Fission yeast).